Here is a 228-residue protein sequence, read N- to C-terminus: Cutinase CUT1 (228 aa).

Residues 1-16 (MQFITVALTLIALASA) form the signal peptide. Cysteines 49 and 127 form a disulfide. Serine 138 acts as the Nucleophile in catalysis. Cysteine 189 and cysteine 196 form a disulfide bridge. A glycan (N-linked (GlcNAc...) asparagine) is linked at asparagine 190. Residue aspartate 193 is part of the active site. Histidine 206 serves as the catalytic Proton donor/acceptor.

Belongs to the cutinase family. In terms of processing, the 2 disulfide bonds play a critical role in holding the catalytic residues in juxta-position; reduction of the disulfide bridges results in the complete inactivation of the enzyme.

The protein localises to the secreted. It carries out the reaction cutin + H2O = cutin monomers.. Catalyzes the hydrolysis of complex carboxylic polyesters found in the cell wall of plants. Degrades cutin, a macromolecule that forms the structure of the plant cuticle. Required for efficient penetration of the host plant cuticle by the appressorium during the initial stage of fungal infection. This chain is Cutinase CUT1, found in Pyricularia oryzae (strain 70-15 / ATCC MYA-4617 / FGSC 8958) (Rice blast fungus).